The following is a 420-amino-acid chain: Succinate--CoA ligase [GDP-forming] subunit beta, mitochondrial (420 aa).

The ATP-grasp domain occupies 35–263 (KSLMDKYGVN…NASFRQKEIF (229 aa)). GTP-binding positions include Q46, 78-80 (GRG), and V135. Residues N232 and D246 each coordinate Mg(2+). Residues N297 and 354 to 356 (GIM) contribute to the substrate site.

This sequence belongs to the succinate/malate CoA ligase beta subunit family. GTP-specific subunit beta subfamily. Heterodimer of an alpha and a beta subunit. The beta subunit determines specificity for GTP. It depends on Mg(2+) as a cofactor.

The protein resides in the mitochondrion. It catalyses the reaction GTP + succinate + CoA = succinyl-CoA + GDP + phosphate. It participates in carbohydrate metabolism; tricarboxylic acid cycle; succinate from succinyl-CoA (ligase route): step 1/1. Functionally, GTP-specific succinyl-CoA synthetase functions in the citric acid cycle (TCA), coupling the hydrolysis of succinyl-CoA to the synthesis of GTP and thus represents the only step of substrate-level phosphorylation in the TCA. The beta subunit provides nucleotide specificity of the enzyme and binds the substrate succinate, while the binding sites for coenzyme A and phosphate are found in the alpha subunit. In Dictyostelium discoideum (Social amoeba), this protein is Succinate--CoA ligase [GDP-forming] subunit beta, mitochondrial (scsB).